The chain runs to 299 residues: Tyrosine recombinase XerC (299 aa).

The region spanning 1-85 (MERQLEAYCA…AVRGLYRYLN (85 aa)) is the Core-binding (CB) domain. The 180-residue stretch at 106 to 285 (RLPKTLDTDR…DFQHLAAVYD (180 aa)) folds into the Tyr recombinase domain. Residues Arg146, Lys170, His237, Arg240, and His263 contribute to the active site. The active-site O-(3'-phospho-DNA)-tyrosine intermediate is the Tyr272.

It belongs to the 'phage' integrase family. XerC subfamily. In terms of assembly, forms a cyclic heterotetrameric complex composed of two molecules of XerC and two molecules of XerD.

The protein localises to the cytoplasm. Its function is as follows. Site-specific tyrosine recombinase, which acts by catalyzing the cutting and rejoining of the recombining DNA molecules. The XerC-XerD complex is essential to convert dimers of the bacterial chromosome into monomers to permit their segregation at cell division. It also contributes to the segregational stability of plasmids. The chain is Tyrosine recombinase XerC from Pseudomonas entomophila (strain L48).